A 511-amino-acid chain; its full sequence is Potassium voltage-gated channel subfamily A member 10 (511 aa).

Residues 22–50 (IQEEPGYATDFDSTSPKGRPGGSSFSNGK) are disordered. Residues 218-238 (VAVVSVLVVVISITIFCLETL) traverse the membrane as a helical segment. N-linked (GlcNAc...) asparagine glycosylation occurs at asparagine 256. The helical transmembrane segment at 271–292 (FFMVESTCIVWFTFELVLRFVV) threads the bilayer. Cysteine 293 carries S-palmitoyl cysteine lipidation. A helical membrane pass occupies residues 303-323 (IMNIIDIISIIPYFATLITEL). A glycan (N-linked (GlcNAc...) asparagine) is linked at asparagine 334. The helical; Voltage-sensor transmembrane segment at 339 to 358 (ILRIIRLVRVFRIFKLSRHS) threads the bilayer. A helical membrane pass occupies residues 375–395 (LGLLIFFLFIGVILFSSAVYF). The Selectivity filter signature appears at 421-426 (TVGYGD). A helical transmembrane segment spans residues 436 to 456 (IVGTLCAIAGVLTIALPVPVI). The disordered stretch occupies residues 489–511 (SRMGSTDSLNKTNGGCSTEKSRK). Residue asparagine 498 is glycosylated (N-linked (GlcNAc...) asparagine).

This sequence belongs to the potassium channel family. A (Shaker) (TC 1.A.1.2) subfamily. Kv1.8/KCNA10 sub-subfamily. In terms of assembly, homotetramer. Interacts with KCN4B/POMP. Interaction with KCN4B/POMP is necessary for the modulation of channel activity by cAMP. As to expression, detected in kidney, in proximal tubules, glomerular endothelium, in vascular endothelium and in smooth muscle cells.

It is found in the membrane. It catalyses the reaction K(+)(in) = K(+)(out). With respect to regulation, the channel activity is up-regulated by cAMP. Functionally, voltage-gated potassium ion channel that mediates K(+) permeability of excitable membranes. When opened in response to the voltage difference across the membrane, KCNA10 channel selectively allows the flow of potassium ions across the membrane down their electrochemical gradient. The protein is Potassium voltage-gated channel subfamily A member 10 of Homo sapiens (Human).